We begin with the raw amino-acid sequence, 324 residues long: Biotin synthase (324 aa).

Positions 42-269 (NEVQISSLLN…KSYIRLAAGR (228 aa)) constitute a Radical SAM core domain. Residues C57, C61, and C64 each coordinate [4Fe-4S] cluster. [2Fe-2S] cluster-binding residues include C101, C132, C192, and R264.

It belongs to the radical SAM superfamily. Biotin synthase family. Homodimer. It depends on [4Fe-4S] cluster as a cofactor. [2Fe-2S] cluster is required as a cofactor.

It catalyses the reaction (4R,5S)-dethiobiotin + (sulfur carrier)-SH + 2 reduced [2Fe-2S]-[ferredoxin] + 2 S-adenosyl-L-methionine = (sulfur carrier)-H + biotin + 2 5'-deoxyadenosine + 2 L-methionine + 2 oxidized [2Fe-2S]-[ferredoxin]. Its pathway is cofactor biosynthesis; biotin biosynthesis; biotin from 7,8-diaminononanoate: step 2/2. Its function is as follows. Catalyzes the conversion of dethiobiotin (DTB) to biotin by the insertion of a sulfur atom into dethiobiotin via a radical-based mechanism. The chain is Biotin synthase from Ehrlichia canis (strain Jake).